A 294-amino-acid polypeptide reads, in one-letter code: 4-hydroxy-tetrahydrodipicolinate synthase (294 aa).

Thr45 contributes to the pyruvate binding site. Tyr133 serves as the catalytic Proton donor/acceptor. Lys161 acts as the Schiff-base intermediate with substrate in catalysis. Residue Ile203 participates in pyruvate binding.

It belongs to the DapA family. In terms of assembly, homotetramer; dimer of dimers.

Its subcellular location is the cytoplasm. It catalyses the reaction L-aspartate 4-semialdehyde + pyruvate = (2S,4S)-4-hydroxy-2,3,4,5-tetrahydrodipicolinate + H2O + H(+). Its pathway is amino-acid biosynthesis; L-lysine biosynthesis via DAP pathway; (S)-tetrahydrodipicolinate from L-aspartate: step 3/4. In terms of biological role, catalyzes the condensation of (S)-aspartate-beta-semialdehyde [(S)-ASA] and pyruvate to 4-hydroxy-tetrahydrodipicolinate (HTPA). The protein is 4-hydroxy-tetrahydrodipicolinate synthase of Alcanivorax borkumensis (strain ATCC 700651 / DSM 11573 / NCIMB 13689 / SK2).